The sequence spans 190 residues: Xanthine phosphoribosyltransferase (190 aa).

Residues L20 and N27 each contribute to the xanthine site. 128-132 serves as a coordination point for 5-phospho-alpha-D-ribose 1-diphosphate; that stretch reads ANGKA. A xanthine-binding site is contributed by K156.

The protein belongs to the purine/pyrimidine phosphoribosyltransferase family. Xpt subfamily. In terms of assembly, homodimer.

It is found in the cytoplasm. The enzyme catalyses XMP + diphosphate = xanthine + 5-phospho-alpha-D-ribose 1-diphosphate. It participates in purine metabolism; XMP biosynthesis via salvage pathway; XMP from xanthine: step 1/1. Functionally, converts the preformed base xanthine, a product of nucleic acid breakdown, to xanthosine 5'-monophosphate (XMP), so it can be reused for RNA or DNA synthesis. The chain is Xanthine phosphoribosyltransferase from Finegoldia magna (strain ATCC 29328 / DSM 20472 / WAL 2508) (Peptostreptococcus magnus).